The primary structure comprises 207 residues: Guanylate kinase (207 aa).

A Guanylate kinase-like domain is found at 5–185 (GFVLLISGPS…SYEALRAILI (181 aa)). 12-19 (GPSGAGKS) is an ATP binding site.

It belongs to the guanylate kinase family.

The protein localises to the cytoplasm. It catalyses the reaction GMP + ATP = GDP + ADP. Essential for recycling GMP and indirectly, cGMP. This Campylobacter jejuni subsp. jejuni serotype O:2 (strain ATCC 700819 / NCTC 11168) protein is Guanylate kinase (gmk).